The sequence spans 357 residues: Large ribosomal subunit protein uL10 (357 aa).

Residues M311–G357 are disordered. Residues E325–A348 show a composition bias toward acidic residues.

Belongs to the universal ribosomal protein uL10 family. In terms of assembly, part of the 50S ribosomal subunit. Forms part of the ribosomal stalk which helps the ribosome interact with GTP-bound translation factors. Forms a heptameric L10(L12)2(L12)2(L12)2 complex, where L10 forms an elongated spine to which the L12 dimers bind in a sequential fashion.

Its function is as follows. Forms part of the ribosomal stalk, playing a central role in the interaction of the ribosome with GTP-bound translation factors. This chain is Large ribosomal subunit protein uL10, found in Methanopyrus kandleri (strain AV19 / DSM 6324 / JCM 9639 / NBRC 100938).